Consider the following 958-residue polypeptide: Exosome complex exonuclease RRP44 (958 aa).

Methionine 1 is subject to N-acetylmethionine. Lysine 18 bears the N6-acetyllysine mark. Positions 64–182 (HYLLPDTNVL…LITNDRKNKE (119 aa)) constitute a PINc domain. Serine 215 carries the phosphoserine modification. A CSD1 domain is found at 227 to 319 (IFSEHLPLSK…LDDEGQNEDD (93 aa)). One can recognise a CSD2 domain in the interval 372–438 (LFTPADKRIP…ETEVLLLEHD (67 aa)). Residues 467-792 (REDLRHLCVC…ADIIVHRLLA (326 aa)) form the RNB domain.

This sequence belongs to the RNR ribonuclease family. In terms of assembly, component of the RNA exosome complex; within the complex interacts with EXOSC4, EXOSC7 and EXOSC9 of the exosome core complex (Exo-9). The catalytically inactive RNA exosome core complex (Exo-9) associates with the catalytic subunit EXOSC10/RRP6. Exo-9 may associate with DIS3 to form the nucleolar exosome complex, or DIS3L to form the cytoplasmic exosome complex. Exo-9 is formed by a hexameric base ring consisting of the heterodimers EXOSC4-EXOSC9, EXOSC5-EXOSC8 and EXOSC6-EXOSC7, and a cap ring consisting of EXOSC1, EXOSC2 and EXOSC3; DIS3 associates with the base ring of Exo-9. The RNA exosome complex associates with cofactors C1D/RRP47, MPHOSPH6/MPP6 and MTREX/MTR4. Interacts with DHX34; the interaction is RNA-independent. Requires Mg(2+) as cofactor. Mn(2+) serves as cofactor.

It localises to the cytoplasm. Its subcellular location is the nucleus. It is found in the nucleolus. The protein localises to the nucleoplasm. In terms of biological role, putative catalytic component of the RNA exosome complex which has 3'-&gt;5' exoribonuclease activity and participates in a multitude of cellular RNA processing and degradation events. In the nucleus, the RNA exosome complex is involved in proper maturation of stable RNA species such as rRNA, snRNA and snoRNA, in the elimination of RNA processing by-products and non-coding 'pervasive' transcripts, such as antisense RNA species and promoter-upstream transcripts (PROMPTs), and of mRNAs with processing defects, thereby limiting or excluding their export to the cytoplasm. The RNA exosome may be involved in Ig class switch recombination (CSR) and/or Ig variable region somatic hypermutation (SHM) by targeting AICDA deamination activity to transcribed dsDNA substrates. In the cytoplasm, the RNA exosome complex is involved in general mRNA turnover and specifically degrades inherently unstable mRNAs containing AU-rich elements (AREs) within their 3' untranslated regions, and in RNA surveillance pathways, preventing translation of aberrant mRNAs. It seems to be involved in degradation of histone mRNA. DIS3 has both 3'-5' exonuclease and endonuclease activities. This Mus musculus (Mouse) protein is Exosome complex exonuclease RRP44 (Dis3).